Consider the following 172-residue polypeptide: Small ribosomal subunit protein uS5 (172 aa).

Residues 17–80 (LREKMIAVNR…DEARRKMIKV (64 aa)) form the S5 DRBM domain.

This sequence belongs to the universal ribosomal protein uS5 family. As to quaternary structure, part of the 30S ribosomal subunit. Contacts proteins S4 and S8.

In terms of biological role, with S4 and S12 plays an important role in translational accuracy. Its function is as follows. Located at the back of the 30S subunit body where it stabilizes the conformation of the head with respect to the body. The polypeptide is Small ribosomal subunit protein uS5 (Polynucleobacter asymbioticus (strain DSM 18221 / CIP 109841 / QLW-P1DMWA-1) (Polynucleobacter necessarius subsp. asymbioticus)).